The chain runs to 539 residues: Chaperonin GroEL (539 aa).

ATP contacts are provided by residues 29–32, 86–90, Gly413, and Asp492; these read TLGP and DGTTT.

The protein belongs to the chaperonin (HSP60) family. Forms a cylinder of 14 subunits composed of two heptameric rings stacked back-to-back. Interacts with the co-chaperonin GroES.

The protein resides in the cytoplasm. It carries out the reaction ATP + H2O + a folded polypeptide = ADP + phosphate + an unfolded polypeptide.. Together with its co-chaperonin GroES, plays an essential role in assisting protein folding. The GroEL-GroES system forms a nano-cage that allows encapsulation of the non-native substrate proteins and provides a physical environment optimized to promote and accelerate protein folding. This Fusobacterium nucleatum subsp. nucleatum (strain ATCC 25586 / DSM 15643 / BCRC 10681 / CIP 101130 / JCM 8532 / KCTC 2640 / LMG 13131 / VPI 4355) protein is Chaperonin GroEL.